Consider the following 154-residue polypeptide: MIIKNLQAFSRLLILNSPLIAIDYGSKKLGIALSNQERSIAMPLNTITEINKKIVITSLLSIVEKYKVCGVVIGMPIDMSGAVTEQTNMVMKFAEEFTKSINLPIYLQDERLTTKAANNFLKSFGMKRKDRDNNDDAVAASMILETVLDSMKNI.

The protein belongs to the YqgF nuclease family.

Its subcellular location is the cytoplasm. Could be a nuclease involved in processing of the 5'-end of pre-16S rRNA. The sequence is that of Putative pre-16S rRNA nuclease from Rickettsia akari (strain Hartford).